Here is a 202-residue protein sequence, read N- to C-terminus: Peptide methionine sulfoxide reductase B1, chloroplastic (202 aa).

Residues 1-63 (MASSTRLTII…SSSPKPDNVQ (63 aa)) constitute a chloroplast transit peptide. The interval 48-67 (YSMGSSSSSPKPDNVQEAEK) is disordered. Residues 75–197 (ENEWKKRLTP…NSAALKLNAL (123 aa)) enclose the MsrB domain. 4 residues coordinate Zn(2+): cysteine 114, cysteine 117, cysteine 163, and cysteine 166. Cysteine 186 serves as the catalytic Nucleophile.

It belongs to the MsrB Met sulfoxide reductase family. Zn(2+) serves as cofactor. Expressed at low levels in stems, leaves, floral buds, flowers and siliques (at protein level).

It is found in the plastid. Its subcellular location is the chloroplast. The catalysed reaction is L-methionyl-[protein] + [thioredoxin]-disulfide + H2O = L-methionyl-(R)-S-oxide-[protein] + [thioredoxin]-dithiol. Catalyzes the reduction of methionine sulfoxide (MetSO) to methionine in proteins. Specifically reduces the MetSO R-enantiomer. Plays a protective role against oxidative stress by restoring activity to proteins that have been inactivated by methionine oxidation. May play an essential function in association with MSRB2 in maintaining vegetative growth during environmental constraints, through the preservation of photosynthetic antennae. MSRB1 and MSRB2 account for most of the leaf peptide MSR capacity. The protein is Peptide methionine sulfoxide reductase B1, chloroplastic of Arabidopsis thaliana (Mouse-ear cress).